A 540-amino-acid polypeptide reads, in one-letter code: Beta-2-syntrophin (540 aa).

The disordered stretch occupies residues 73–114 (LPNGGGAGDSLPGSPSRGLGPPSPPAPPRGPAGEAGASPPVR). The segment covering 81-92 (DSLPGSPSRGLG) has biased composition (low complexity). Positions 93-102 (PPSPPAPPRG) are enriched in pro residues. A phosphoserine mark is found at S95, S110, S129, S211, S222, S233, S393, and S395. Residues 103–112 (PAGEAGASPP) show a composition bias toward low complexity. A PDZ domain is found at 115-198 (RVRVVKQEAG…EVLLEVKFIR (84 aa)). PH domains are found at residues 163–300 (ILSV…TNIM) and 325–437 (EVKH…QGCH). A disordered region spans residues 220–240 (PQSPSFSGSEDSGSPKHQNST). Over residues 222–231 (SPSFSGSEDS) the composition is skewed to low complexity. Residues 484–540 (PFERLKMSADDGIRNLYLDFGGPEGELTMDLHSCPKPIVFVLHTFLSAKVTRMGLLV) form the SU domain. Residues 518-540 (PKPIVFVLHTFLSAKVTRMGLLV) are calmodulin-binding.

The protein belongs to the syntrophin family. As to quaternary structure, monomer and homodimer. Interacts with the other members of the syntrophin family: SNTA1 and SNTB1; and with the sodium channel proteins SCN4A and SCN5A. Interacts with SAST, MAST205, microtubules and microtubule-associated proteins. Interacts with the dystrophin protein DMD and related proteins DTNA and UTRN, and with the neuroregulin receptor ERBB4. Interacts with PTPRN when phosphorylated, protecting PTPRN from protein cleavage by CAPN1. Dephosphorylation upon insulin stimulation disrupts the interaction with PTPRN and results in the cleavage of PTPRN. Interacts with DTNB. Post-translationally, phosphorylated. Partially dephosphorylated upon insulin stimulation. Ubiquitous. Isoform 1 is the predominant isoform. Weak level of isoform 2 is present in all tested tissues, except in liver and heart where it is highly expressed.

The protein localises to the membrane. It is found in the cytoplasmic vesicle. The protein resides in the secretory vesicle membrane. It localises to the cell junction. Its subcellular location is the cytoplasm. The protein localises to the cytoskeleton. Functionally, adapter protein that binds to and probably organizes the subcellular localization of a variety of membrane proteins. May link various receptors to the actin cytoskeleton and the dystrophin glycoprotein complex. May play a role in the regulation of secretory granules via its interaction with PTPRN. The sequence is that of Beta-2-syntrophin (SNTB2) from Homo sapiens (Human).